The chain runs to 136 residues: Large ribosomal subunit protein uL22 (136 aa).

It belongs to the universal ribosomal protein uL22 family. Part of the 50S ribosomal subunit.

In terms of biological role, this protein binds specifically to 23S rRNA; its binding is stimulated by other ribosomal proteins, e.g. L4, L17, and L20. It is important during the early stages of 50S assembly. It makes multiple contacts with different domains of the 23S rRNA in the assembled 50S subunit and ribosome. The globular domain of the protein is located near the polypeptide exit tunnel on the outside of the subunit, while an extended beta-hairpin is found that lines the wall of the exit tunnel in the center of the 70S ribosome. This Leifsonia xyli subsp. xyli (strain CTCB07) protein is Large ribosomal subunit protein uL22.